The chain runs to 99 residues: Protein RnfH (99 aa).

This sequence belongs to the UPF0125 (RnfH) family.

This Tolumonas auensis (strain DSM 9187 / NBRC 110442 / TA 4) protein is Protein RnfH.